The primary structure comprises 555 residues: MTSISLTIAPDLIHCGVPQRLSDTIILNDKPKITLLSYFDNIFTEANIIKAPKEHSVQSTVNIYVKLELLKRLYDRLQSVDTSTLPYISQIKEALRSFLHNDIQYVFTRIPDSEIDGNYVGVTTHGLSLFANAKNDAEEIERVQIDTPTEGNLTLKPISADGVEVVLDDSYINAVSKVIGPDVHKLIDKCCKEFPAHVGTILEEVKYCLILGKLRLAGGYDYNCPSSTTDVTRYGDFDKFRIKMFNKLTRFYNVSLALVPCNKLKMQYIFDSESEKINGDRTFLDQAWPAITSFIETHDLATKVKTDDPDTYVLKEVKSCKINSSTKQATLVNLDGNKLEWYKNNIYNAKLEDGIVINRELYEKAADKSYIKYNVKVVFASYALQKIIDEKSDKSITVDTSAGEMTLDKYRAIANVLNSIWKRGKDMAIKYFDYIKMGIEKATHLSLNLMKKYNITLDDVVSFIEKGPGYLATLQKLNDYKLIAKIIICHILPTIIQCVYKSDPNSKIMNSTLITNAVNLIRQDTKRYESSTGRKDANLVTHDASSLPLIRIYKT.

It localises to the virion. The polypeptide is Putative outer capsid protein p10 (S10) (Saccharum officinarum (Sugarcane)).